The primary structure comprises 480 residues: Proline--tRNA ligase (480 aa).

The protein belongs to the class-II aminoacyl-tRNA synthetase family. ProS type 3 subfamily. In terms of assembly, homodimer.

The protein resides in the cytoplasm. The enzyme catalyses tRNA(Pro) + L-proline + ATP = L-prolyl-tRNA(Pro) + AMP + diphosphate. Functionally, catalyzes the attachment of proline to tRNA(Pro) in a two-step reaction: proline is first activated by ATP to form Pro-AMP and then transferred to the acceptor end of tRNA(Pro). The sequence is that of Proline--tRNA ligase from Pyrococcus horikoshii (strain ATCC 700860 / DSM 12428 / JCM 9974 / NBRC 100139 / OT-3).